The primary structure comprises 313 residues: Porphobilinogen deaminase (313 aa).

Cysteine 242 carries the S-(dipyrrolylmethanemethyl)cysteine modification.

It belongs to the HMBS family. As to quaternary structure, monomer. The cofactor is dipyrromethane.

The enzyme catalyses 4 porphobilinogen + H2O = hydroxymethylbilane + 4 NH4(+). It functions in the pathway porphyrin-containing compound metabolism; protoporphyrin-IX biosynthesis; coproporphyrinogen-III from 5-aminolevulinate: step 2/4. Its function is as follows. Tetrapolymerization of the monopyrrole PBG into the hydroxymethylbilane pre-uroporphyrinogen in several discrete steps. This chain is Porphobilinogen deaminase, found in Pseudomonas fluorescens (strain SBW25).